Reading from the N-terminus, the 301-residue chain is Acetylglutamate kinase (301 aa).

Substrate contacts are provided by residues 68-69 (GG), Arg-90, and Asn-195.

It belongs to the acetylglutamate kinase family. ArgB subfamily.

It is found in the cytoplasm. It catalyses the reaction N-acetyl-L-glutamate + ATP = N-acetyl-L-glutamyl 5-phosphate + ADP. It functions in the pathway amino-acid biosynthesis; L-arginine biosynthesis; N(2)-acetyl-L-ornithine from L-glutamate: step 2/4. Functionally, catalyzes the ATP-dependent phosphorylation of N-acetyl-L-glutamate. The chain is Acetylglutamate kinase from Pseudomonas entomophila (strain L48).